Reading from the N-terminus, the 256-residue chain is Small ribosomal subunit protein uS2 (256 aa).

This sequence belongs to the universal ribosomal protein uS2 family.

This is Small ribosomal subunit protein uS2 from Brucella melitensis biotype 1 (strain ATCC 23456 / CCUG 17765 / NCTC 10094 / 16M).